Reading from the N-terminus, the 404-residue chain is Probable tRNA sulfurtransferase (404 aa).

A THUMP domain is found at 60-165 (EPVAEALKNV…DEAAYISHEE (106 aa)). ATP contacts are provided by residues 183–184 (ML), 208–209 (HF), Arg-265, Gly-287, and Gln-296.

The protein belongs to the ThiI family.

Its subcellular location is the cytoplasm. The enzyme catalyses [ThiI sulfur-carrier protein]-S-sulfanyl-L-cysteine + a uridine in tRNA + 2 reduced [2Fe-2S]-[ferredoxin] + ATP + H(+) = [ThiI sulfur-carrier protein]-L-cysteine + a 4-thiouridine in tRNA + 2 oxidized [2Fe-2S]-[ferredoxin] + AMP + diphosphate. It carries out the reaction [ThiS sulfur-carrier protein]-C-terminal Gly-Gly-AMP + S-sulfanyl-L-cysteinyl-[cysteine desulfurase] + AH2 = [ThiS sulfur-carrier protein]-C-terminal-Gly-aminoethanethioate + L-cysteinyl-[cysteine desulfurase] + A + AMP + 2 H(+). Its pathway is cofactor biosynthesis; thiamine diphosphate biosynthesis. Its function is as follows. Catalyzes the ATP-dependent transfer of a sulfur to tRNA to produce 4-thiouridine in position 8 of tRNAs, which functions as a near-UV photosensor. Also catalyzes the transfer of sulfur to the sulfur carrier protein ThiS, forming ThiS-thiocarboxylate. This is a step in the synthesis of thiazole, in the thiamine biosynthesis pathway. The sulfur is donated as persulfide by IscS. The protein is Probable tRNA sulfurtransferase of Streptococcus uberis (strain ATCC BAA-854 / 0140J).